Consider the following 347-residue polypeptide: Heat-inducible transcription repressor HrcA (347 aa).

It belongs to the HrcA family.

Its function is as follows. Negative regulator of class I heat shock genes (grpE-dnaK-dnaJ and groELS operons). Prevents heat-shock induction of these operons. The polypeptide is Heat-inducible transcription repressor HrcA (Rhodococcus jostii (strain RHA1)).